The chain runs to 316 residues: 1-phosphofructokinase (316 aa).

ATP-binding positions include 225–230 and 256–257; these read SMGAGG and GD. Residue aspartate 257 is the Proton acceptor of the active site.

Belongs to the carbohydrate kinase PfkB family.

The enzyme catalyses beta-D-fructose 1-phosphate + ATP = beta-D-fructose 1,6-bisphosphate + ADP + H(+). In terms of biological role, catalyzes the ATP-dependent phosphorylation of fructose-l-phosphate to fructose-l,6-bisphosphate. This chain is 1-phosphofructokinase, found in Rhodobacter capsulatus (Rhodopseudomonas capsulata).